A 196-amino-acid chain; its full sequence is Peroxiredoxin TSA1-B (196 aa).

The 159-residue stretch at Pro3 to Phe161 folds into the Thioredoxin domain. Thr45–Val47 provides a ligand contact to substrate. The Cysteine sulfenic acid (-SOH) intermediate role is filled by Cys48. Residue Arg124 participates in substrate binding. The interval Trp173–Lys196 is disordered. Over residues Pro175–Lys196 the composition is skewed to basic and acidic residues.

The protein belongs to the peroxiredoxin family. AhpC/Prx1 subfamily. As to quaternary structure, homodimer; disulfide-linked, upon oxidation.

It is found in the cell surface. The protein resides in the nucleus. It localises to the cytoplasm. The catalysed reaction is a hydroperoxide + [thioredoxin]-dithiol = an alcohol + [thioredoxin]-disulfide + H2O. In terms of biological role, thiol-specific peroxidase that catalyzes the reduction of hydrogen peroxide and organic hydroperoxides to water and alcohols, respectively. Plays a role in cell protection against oxidative stress by detoxifying peroxides and as sensor of hydrogen peroxide-mediated signaling events. Also involved in the correct composition of the hyphal cell wall. This is Peroxiredoxin TSA1-B from Candida albicans (strain SC5314 / ATCC MYA-2876) (Yeast).